The following is a 1958-amino-acid chain: Rho GTPase-activating protein 21 (1958 aa).

The segment at 1–42 (MMATRRTGLSEGDGDKLKACEVSKNKDGKEQSETVSLSEDET) is disordered. Residues 13–32 (DGDKLKACEVSKNKDGKEQS) are compositionally biased toward basic and acidic residues. Ser-36 and Ser-57 each carry phosphoserine. Residues 50 to 159 (TVTLKRTSQG…TLELSVMPKD (110 aa)) form the PDZ domain. Polar residues-rich tracts occupy residues 286–295 (SNRNNHTGPS), 306–325 (SEQTSLKTVSRTTSPPLSIP), and 418–436 (ASQSTTDYNQVVPNRTTLQ). Disordered regions lie at residues 286–325 (SNRNNHTGPSHRTEEVRYGVSEQTSLKTVSRTTSPPLSIP) and 418–458 (ASQS…QRSV). Residues 448–458 (PQSVQIRQRSV) show a composition bias toward low complexity. Residue Ser-459 is modified to Phosphoserine. 2 positions are modified to omega-N-methylarginine: Arg-554 and Arg-575. A phosphoserine mark is found at Ser-612, Ser-616, and Ser-625. Over residues 659-687 (SLLNQQTWVRTDSAPDQQVETGKSPSLSG) the composition is skewed to polar residues. The interval 659–751 (SLLNQQTWVR…PSGRQTPQPL (93 aa)) is disordered. The residue at position 717 (Ser-717) is a Phosphoserine. Positions 729–742 (LDNKEAVILREKPP) are enriched in basic and acidic residues. Thr-747 is modified (phosphothreonine). Residues Ser-857, Ser-862, and Ser-881 each carry the phosphoserine modification. The disordered stretch occupies residues 859 to 885 (DHESVGPPSLDAQPNSKTERSKSYDEG). The segment covering 875–885 (KTERSKSYDEG) has biased composition (basic and acidic residues). Residue Tyr-882 is modified to Phosphotyrosine. Ser-924, Ser-926, Ser-954, Ser-1099, and Ser-1115 each carry phosphoserine. The interaction with ARF1 and ARF6 stretch occupies residues 930 to 1097 (SDAAKEGWLH…AKSEPKTQSP (168 aa)). Positions 931-1040 (DAAKEGWLHF…WIKTIQESSN (110 aa)) constitute a PH domain. Residues 1086–1133 (LGAKSEPKTQSPHSPKEESERKLLSKDDTSPPKDKGTWRKGIPSIMRK) form a disordered region. The span at 1099-1122 (SPKEESERKLLSKDDTSPPKDKGT) shows a compositional bias: basic and acidic residues. A Rho-GAP domain is found at 1147-1339 (VRLDDCPPAH…TLIQHHDWFF (193 aa)). Disordered stretches follow at residues 1348-1401 (LTTV…GSGK), 1418-1575 (SRKR…KHSE), 1598-1642 (SLDS…SEFP), and 1655-1686 (RGKLQEVTKSSRRNSEGSELSCTEGSLTSSLD). The span at 1349-1362 (TTVQEESTVDSQPV) shows a compositional bias: polar residues. Low complexity predominate over residues 1383-1401 (SDSATSDSTKSKGSWGSGK). Ser-1418, Ser-1432, and Ser-1433 each carry phosphoserine. 2 stretches are compositionally biased toward basic and acidic residues: residues 1441 to 1466 (FFKKENVEQCHNDTKEESKKESETLG) and 1477 to 1493 (NSTRKDPSTTKDEKISL). Lys-1444 participates in a covalent cross-link: Glycyl lysine isopeptide (Lys-Gly) (interchain with G-Cter in SUMO). Residue Ser-1504 is modified to Phosphoserine. Thr-1516 is modified (phosphothreonine). Ser-1527 carries the phosphoserine modification. Residues 1544–1559 (SDSGTLLSTSSQASLA) are compositionally biased toward low complexity. The interaction with CTNNA1 stretch occupies residues 1592–1861 (SATYLTSLDS…WLARERLRTS (270 aa)). Residues 1603–1612 (RLSPEVQSVA) are compositionally biased toward polar residues. Residues 1624-1634 (SELISEGRPVE) show a composition bias toward basic and acidic residues. Phosphoserine is present on Ser-1669. Residues 1671–1686 (GSELSCTEGSLTSSLD) are compositionally biased toward polar residues. Thr-1682 carries the post-translational modification Phosphothreonine. Ser-1742 carries the phosphoserine modification. The interval 1860–1958 (TSTSDLSRGE…GSKAEFHPCL (99 aa)) is disordered. Residues 1874–1909 (QTENPSTREIATTDTPLSLHCNTGSSSSTLASTNRP) are compositionally biased toward polar residues. Ser-1917 is modified (phosphoserine). A compositionally biased stretch (polar residues) spans 1918–1931 (PDQINGESFQNVSK).

Interacts with GTP-bound ARF1 and ARF6. Interacts with CTNNA1. Sumoylated with SUMO2 and SUMO3 in proliferating lymphocytes. In terms of tissue distribution, widely expressed with higher expression in brain, heart, skeletal muscle and placenta.

The protein localises to the golgi apparatus membrane. It is found in the cell junction. It localises to the cytoplasmic vesicle membrane. Its subcellular location is the cytoplasm. The protein resides in the cytoskeleton. In terms of biological role, functions as a GTPase-activating protein (GAP) for RHOA and CDC42. Downstream partner of ARF1 which may control Golgi apparatus structure and function. Also required for CTNNA1 recruitment to adherens junctions. The chain is Rho GTPase-activating protein 21 (ARHGAP21) from Homo sapiens (Human).